Consider the following 118-residue polypeptide: Small ribosomal subunit protein uS13 (118 aa).

Residues 94-118 (SLPLRGQRTKTNARTRKGPRKPIKK) are disordered.

It belongs to the universal ribosomal protein uS13 family. As to quaternary structure, part of the 30S ribosomal subunit. Forms a loose heterodimer with protein S19. Forms two bridges to the 50S subunit in the 70S ribosome.

Its function is as follows. Located at the top of the head of the 30S subunit, it contacts several helices of the 16S rRNA. In the 70S ribosome it contacts the 23S rRNA (bridge B1a) and protein L5 of the 50S subunit (bridge B1b), connecting the 2 subunits; these bridges are implicated in subunit movement. Contacts the tRNAs in the A and P-sites. The protein is Small ribosomal subunit protein uS13 of Alteromonas mediterranea (strain DSM 17117 / CIP 110805 / LMG 28347 / Deep ecotype).